The primary structure comprises 152 residues: Peptide deformylase (152 aa).

2 residues coordinate Fe cation: Cys-88 and His-130. The active site involves Glu-131. Residue His-134 coordinates Fe cation.

This sequence belongs to the polypeptide deformylase family. Fe(2+) serves as cofactor.

The enzyme catalyses N-terminal N-formyl-L-methionyl-[peptide] + H2O = N-terminal L-methionyl-[peptide] + formate. Functionally, removes the formyl group from the N-terminal Met of newly synthesized proteins. Requires at least a dipeptide for an efficient rate of reaction. N-terminal L-methionine is a prerequisite for activity but the enzyme has broad specificity at other positions. This chain is Peptide deformylase, found in Carboxydothermus hydrogenoformans (strain ATCC BAA-161 / DSM 6008 / Z-2901).